We begin with the raw amino-acid sequence, 553 residues long: MLLLLVSVVAALALAAPAPRTQKKRMQVNQAPNVVLVASDSFDGRLTFQPGSQVVKLPFINFMRAHGTTFLNAYTNSPICCPSRAAMWSGLFTHLTESWNNFKGLDPNYTTWMDIMEKHGYQTQKFGKVDYTSGHHSISNRVEAWTRDVAFLLRQEGRPIINLIPDKNRRRVMTKDWQNTDKAIEWLRQVNYTKPFVLYLGLNLPHPYPSPSSGENFGSSTFHTSLYWLEKVAYDAIKIPKWLTLSQMHPVDFYSSYTKNCTGKFTENEIKNIRAFYYAMCAETDAMLGEIILALHKLDLLQKTIVIYTSDHGEMAMEHRQFYKMSMYEASVHVPLLMMGPGIKANLQVPSVVSLVDIYPTMLDIAGIALPPNLSGYSLLTLLSNASANEQAFKFHRPPWILSEFHGCNANASTYMLRTGQWKYIAYADGASVQPQLFDLSLDPDELTNIATEFPEITYSLDQKLRSIVNYPKVSASVHQYNKEQFIMWKQSVGQNYSNVIAHLRWHQDWQRDPRKYENAIQHWLTAHSSPLASSPTQSTSGSQPTLPQSTSG.

An N-terminal signal peptide occupies residues 1–16 (MLLLLVSVVAALALAA). Ca(2+) contacts are provided by aspartate 40 and cysteine 80. Catalysis depends on cysteine 80, which acts as the Nucleophile. 3-oxoalanine (Cys) is present on cysteine 80. The N-linked (GlcNAc...) asparagine glycan is linked to asparagine 108. Lysine 128 contributes to the substrate binding site. The N-linked (GlcNAc...) asparagine glycan is linked to asparagine 191. A substrate-binding site is contributed by histidine 249. Residue asparagine 260 is glycosylated (N-linked (GlcNAc...) asparagine). Positions 311 and 312 each coordinate Ca(2+). N-linked (GlcNAc...) asparagine glycans are attached at residues asparagine 373, asparagine 411, and asparagine 496. The disordered stretch occupies residues 530-553 (SPLASSPTQSTSGSQPTLPQSTSG). Over residues 534–553 (SSPTQSTSGSQPTLPQSTSG) the composition is skewed to low complexity.

This sequence belongs to the sulfatase family. Ca(2+) serves as cofactor. The conversion to 3-oxoalanine (also known as C-formylglycine, FGly), of a serine or cysteine residue in prokaryotes and of a cysteine residue in eukaryotes, is critical for catalytic activity. Post-translationally, the 75-kDa precursor undergoes proteolytic processing to yield a 23 kDa form. In terms of processing, N-glycosylated with both high mannose and complex type sugars.

Its subcellular location is the secreted. It is found in the lysosome. It catalyses the reaction an aryl sulfate + H2O = a phenol + sulfate + H(+). It carries out the reaction Hydrolysis of the 2-sulfate groups of the 2-O-sulfo-D-glucuronate residues of chondroitin sulfate, heparin and heparitin sulfate.. In terms of biological role, catalyzes the hydrolysis of pseudosubstrates such as p-nitrocatechol sulfate and p-nitrophenyl sulfate. Catalyzes the hydrolysis of the 2-sulfate groups of the 2-O-sulfo-D-glucuronate residues of chondroitin sulfate, heparin and heparitin sulfate. Acts selectively on 2-sulfoglucuronate and lacks activity against 2-sulfoiduronate. This Mus musculus (Mouse) protein is Arylsulfatase K (Arsk).